The sequence spans 881 residues: Formin-like protein 10 (881 aa).

A signal peptide spans 1–24; it reads MAMKRVVFLLLLVAASALVKSSRG. The disordered stretch occupies residues 194–223; the sequence is LTPSNSLNMEPPSPYYPSKSAHKHQGVAPP. Residues 236 to 256 traverse the membrane as a helical segment; sequence VVLIAVLPTAALSFLAAFLCF. Positions 333–346 are enriched in polar residues; the sequence is TLVTGGTQENNATS. 3 disordered regions span residues 333–427, 683–703, and 837–881; these read TLVT…EVNA, ENGR…ESLQ, and ASQK…DSND. The segment covering 351-390 has biased composition (pro residues); sequence LMPPPPPPPPPPPPPPPPPPPRPPPPPPPIKKGAPPPAPP. Positions 400–424 are enriched in low complexity; the sequence is LSPTESSRSEESSASELASESSETE. Residues 422–854 form the FH2 domain; sequence ETEVNAPRAK…KSQANGNSNN (433 aa). Polar residues predominate over residues 692–701; the sequence is STSDDNSNES. Over residues 846–865 the composition is skewed to low complexity; it reads SQANGNSNNPSSQSNPQEQQ. The segment covering 870–881 has biased composition (basic and acidic residues); sequence LDHHFDSSDSND.

It belongs to the formin-like family. Class-I subfamily.

It is found in the membrane. This chain is Formin-like protein 10 (FH10), found in Oryza sativa subsp. japonica (Rice).